The primary structure comprises 343 residues: Olfactory receptor 1E3 (343 aa).

Residues 1 to 28 (MMKKNQTMISEFLLLGLPIQPEQQNLFY) are Extracellular-facing. N-linked (GlcNAc...) asparagine glycosylation is present at N5. A helical transmembrane segment spans residues 29-49 (ALFLAVYLTTLLGNLLVIVLI). Topologically, residues 50 to 107 (RLDSHLHMPMYLCLSNLSFSDLCFSSVTMPKLLQNMQSQNPSIPFADCLAQMYFHLFY) are cytoplasmic. An intrachain disulfide couples C97 to C179. The chain crosses the membrane as a helical span at residues 108–128 (GVLESFLLVVMAYHCYVAICF). Topologically, residues 129-141 (PLHYTTIMSPKCC) are extracellular. The helical transmembrane segment at 142 to 162 (LGLLTLSWLLTTAHATLHTLL) threads the bilayer. Residues 163–195 (MARLSFCAENVIPHFFCDTSTLLKLACSNTQVN) lie on the Cytoplasmic side of the membrane. Residues 196-216 (GWVMFFMGGLILVIPFLLLIM) form a helical membrane-spanning segment. The Extracellular segment spans residues 217–242 (SCARIVSTILRVPSTGGIQKAFSTCG). Residues 243-263 (PHLSVVSLFYGTIIGLYLCPL) traverse the membrane as a helical segment. At 264–271 (TNHNTVKD) the chain is on the cytoplasmic side. A helical membrane pass occupies residues 272-292 (TVMAVMYTGVTHMLNPFIYSL). Residues 293–310 (RNRDMRGNPGQSLQHKEN) lie on the Extracellular side of the membrane. Residues 311–331 (FFVFKIVIVGILPLLNLVGVV) form a helical membrane-spanning segment. The Cytoplasmic segment spans residues 332–343 (KLIMKYHSKSVA).

The protein belongs to the G-protein coupled receptor 1 family.

It is found in the cell membrane. In terms of biological role, odorant receptor. The polypeptide is Olfactory receptor 1E3 (OR1E3) (Homo sapiens (Human)).